The following is a 116-amino-acid chain: Protein Wnt-5a (116 aa).

Serine 1 carries the O-palmitoleoyl serine; by PORCN lipid modification. Residues asparagine 69 and asparagine 83 are each glycosylated (N-linked (GlcNAc...) asparagine). Cysteines 82 and 97 form a disulfide.

It belongs to the Wnt family. Post-translationally, palmitoleoylation is required for efficient binding to frizzled receptors. Depalmitoleoylation leads to Wnt signaling pathway inhibition.

It localises to the secreted. It is found in the extracellular space. Its subcellular location is the extracellular matrix. In terms of biological role, ligand for members of the frizzled family of seven transmembrane receptors. Can activate or inhibit canonical Wnt signaling, depending on receptor context. Required during embryogenesis for extension of the primary anterior-posterior axis. This chain is Protein Wnt-5a (WNT5A), found in Meleagris gallopavo (Wild turkey).